We begin with the raw amino-acid sequence, 272 residues long: uncharacterized protein (272 aa).

The first 22 residues, 1-22 (MEYIKKIALYMSVLLLIIFIGG), serve as a signal peptide directing secretion. A lipid anchor (N-palmitoyl cysteine) is attached at Cys23. The S-diacylglycerol cysteine moiety is linked to residue Cys23.

Belongs to the staphylococcal tandem lipoprotein family.

It is found in the cell membrane. This is an uncharacterized protein from Staphylococcus aureus (strain MRSA252).